The sequence spans 541 residues: Membrane protein insertase YidC (541 aa).

5 helical membrane passes run 7 to 27 (LLFM…QVDY), 345 to 365 (LVQN…AVLY), 415 to 435 (LGGC…YWTF), 453 to 473 (LSAQ…MFLL), and 492 to 512 (FMPL…VLYW).

It belongs to the OXA1/ALB3/YidC family. Type 1 subfamily. In terms of assembly, interacts with the Sec translocase complex via SecD. Specifically interacts with transmembrane segments of nascent integral membrane proteins during membrane integration.

The protein resides in the cell inner membrane. Required for the insertion and/or proper folding and/or complex formation of integral membrane proteins into the membrane. Involved in integration of membrane proteins that insert both dependently and independently of the Sec translocase complex, as well as at least some lipoproteins. Aids folding of multispanning membrane proteins. This chain is Membrane protein insertase YidC, found in Histophilus somni (strain 2336) (Haemophilus somnus).